Consider the following 125-residue polypeptide: Holo-[acyl-carrier-protein] synthase (125 aa).

Positions 8 and 57 each coordinate Mg(2+).

Belongs to the P-Pant transferase superfamily. AcpS family. It depends on Mg(2+) as a cofactor.

The protein resides in the cytoplasm. It catalyses the reaction apo-[ACP] + CoA = holo-[ACP] + adenosine 3',5'-bisphosphate + H(+). Functionally, transfers the 4'-phosphopantetheine moiety from coenzyme A to a Ser of acyl-carrier-protein. The sequence is that of Holo-[acyl-carrier-protein] synthase from Nitrosomonas europaea (strain ATCC 19718 / CIP 103999 / KCTC 2705 / NBRC 14298).